Reading from the N-terminus, the 459-residue chain is Ribulose bisphosphate carboxylase (459 aa).

Asn-111 lines the substrate pocket. Lys-166 serves as the catalytic Proton acceptor. Lys-168 provides a ligand contact to substrate. Mg(2+) is bound by residues Lys-191, Asp-193, and Glu-194. Lys-191 carries the post-translational modification N6-carboxylysine. Residue His-287 is the Proton acceptor of the active site. Residues Arg-288, His-321, and Ser-368 each coordinate substrate.

The protein belongs to the RuBisCO large chain family. Type II subfamily. In terms of assembly, homodimer. Mg(2+) is required as a cofactor.

It carries out the reaction 2 (2R)-3-phosphoglycerate + 2 H(+) = D-ribulose 1,5-bisphosphate + CO2 + H2O. The enzyme catalyses D-ribulose 1,5-bisphosphate + O2 = 2-phosphoglycolate + (2R)-3-phosphoglycerate + 2 H(+). RuBisCO catalyzes two reactions: the carboxylation of D-ribulose 1,5-bisphosphate, the primary event in carbon dioxide fixation, as well as the oxidative fragmentation of the pentose substrate. Both reactions occur simultaneously and in competition at the same active site. This Cereibacter sphaeroides (Rhodobacter sphaeroides) protein is Ribulose bisphosphate carboxylase.